We begin with the raw amino-acid sequence, 208 residues long: ATP-dependent Clp protease proteolytic subunit (208 aa).

Catalysis depends on Ser-105, which acts as the Nucleophile. His-130 is a catalytic residue.

This sequence belongs to the peptidase S14 family. In terms of assembly, fourteen ClpP subunits assemble into 2 heptameric rings which stack back to back to give a disk-like structure with a central cavity, resembling the structure of eukaryotic proteasomes.

It localises to the cytoplasm. The enzyme catalyses Hydrolysis of proteins to small peptides in the presence of ATP and magnesium. alpha-casein is the usual test substrate. In the absence of ATP, only oligopeptides shorter than five residues are hydrolyzed (such as succinyl-Leu-Tyr-|-NHMec, and Leu-Tyr-Leu-|-Tyr-Trp, in which cleavage of the -Tyr-|-Leu- and -Tyr-|-Trp bonds also occurs).. Its function is as follows. Cleaves peptides in various proteins in a process that requires ATP hydrolysis. Has a chymotrypsin-like activity. Plays a major role in the degradation of misfolded proteins. In Xanthomonas axonopodis pv. citri (strain 306), this protein is ATP-dependent Clp protease proteolytic subunit.